Reading from the N-terminus, the 63-residue chain is Small ribosomal subunit protein eS17 (63 aa).

The protein belongs to the eukaryotic ribosomal protein eS17 family.

This chain is Small ribosomal subunit protein eS17, found in Methanococcus vannielii (strain ATCC 35089 / DSM 1224 / JCM 13029 / OCM 148 / SB).